We begin with the raw amino-acid sequence, 1225 residues long: Chromosome-associated kinesin KIF4 (1225 aa).

The Kinesin motor domain occupies 9-338 (IPVRVVRCRP…LRYADRARKI (330 aa)). An ATP-binding site is contributed by 88-95 (GQTGSGKT). Residues 352–1003 (ELNHLKQQVQ…LKQKMLLVQV (652 aa)) adopt a coiled-coil conformation. 3 disordered regions span residues 498-520 (QDAA…FTTQ), 717-744 (NKRL…GMEG), and 1006-1047 (GQKL…PTPE). A compositionally biased stretch (polar residues) spans 507-520 (GQVTKRSSDDFTTQ). Positions 719 to 738 (RLKDALQKQREAADKRKESQ) are enriched in basic and acidic residues. The globular stretch occupies residues 1004–1225 (ASGQKLRRDQ…GCTPIKEEID (222 aa)).

It belongs to the TRAFAC class myosin-kinesin ATPase superfamily. Kinesin family. Chromokinesin subfamily. [2Fe-2S] cluster is required as a cofactor. Requires [4Fe-4S] cluster as cofactor. Expressed in proliferating cells; neuroepithelium of embryos.

It is found in the nucleus. It localises to the chromosome. Its subcellular location is the cytoplasm. The protein localises to the cytoskeleton. In terms of biological role, iron-sulfur (Fe-S) cluster binding motor protein that has a role in chromosome segregation during mitosis. Required for mitotic chromosomal positioning and bipolar spindle stabilization. The protein is Chromosome-associated kinesin KIF4 (KIF4) of Gallus gallus (Chicken).